The chain runs to 455 residues: Kynurenine 3-monooxygenase (455 aa).

The protein belongs to the aromatic-ring hydroxylase family. KMO subfamily. Requires FAD as cofactor.

The catalysed reaction is L-kynurenine + NADPH + O2 + H(+) = 3-hydroxy-L-kynurenine + NADP(+) + H2O. The protein operates within cofactor biosynthesis; NAD(+) biosynthesis; quinolinate from L-kynurenine: step 1/3. Its function is as follows. Catalyzes the hydroxylation of L-kynurenine (L-Kyn) to form 3-hydroxy-L-kynurenine (L-3OHKyn). Required for synthesis of quinolinic acid. This Xanthomonas oryzae pv. oryzae (strain PXO99A) protein is Kynurenine 3-monooxygenase.